A 107-amino-acid chain; its full sequence is Cell cycle protein GpsB (107 aa).

Residues 32-65 adopt a coiled-coil conformation; sequence LDNVIQDYETYISEIEELKAEIERLKNQNTHPKS. The segment at 57–80 is disordered; that stretch reads KNQNTHPKSPSTENRHAMVQPTRV. Over residues 58 to 68 the composition is skewed to polar residues; the sequence is NQNTHPKSPST.

The protein belongs to the GpsB family. In terms of assembly, forms polymers through the coiled coil domains. Interacts with PBP1, MreC and EzrA.

The protein localises to the cytoplasm. In terms of biological role, divisome component that associates with the complex late in its assembly, after the Z-ring is formed, and is dependent on DivIC and PBP2B for its recruitment to the divisome. Together with EzrA, is a key component of the system that regulates PBP1 localization during cell cycle progression. Its main role could be the removal of PBP1 from the cell pole after pole maturation is completed. Also contributes to the recruitment of PBP1 to the division complex. Not essential for septum formation. This is Cell cycle protein GpsB from Streptococcus uberis (strain ATCC BAA-854 / 0140J).